A 45-amino-acid polypeptide reads, in one-letter code: Sperm-specific protein Phi-3 (45 aa).

The tract at residues 1-45 (AKAKRSPRKKKAAVKKSSKSKAKKPKSPKKKKAAKKPAKKAAKKK) is disordered.

It localises to the nucleus. The protein resides in the chromosome. Involved in nuclear basic protein transition: histones are replaced by spermatid specific proteins which are themselves replaced by protamines in late spermatids. This Mytilus californianus (California mussel) protein is Sperm-specific protein Phi-3.